A 225-amino-acid polypeptide reads, in one-letter code: C-reactive protein (225 aa).

Residues 1-19 (MEKLLWCLLIMISFSRTFG) form the signal peptide. The 202-residue stretch at 24-225 (FKKAFVFPKE…DVFIKPQLWS (202 aa)) folds into the Pentraxin (PTX) domain. Cys-55 and Cys-116 are disulfide-bonded. Residues Asn-80, Glu-157, Gln-158, Asp-159, and Gln-169 each coordinate Ca(2+).

The protein belongs to the pentraxin family. As to quaternary structure, homopentamer. Pentraxin (or pentaxin) have a discoid arrangement of 5 non-covalently bound subunits. Interacts with FCN1; may regulate monocyte activation by FCN1. Requires Ca(2+) as cofactor. Found in plasma.

The protein localises to the secreted. In terms of biological role, displays several functions associated with host defense: it promotes agglutination, bacterial capsular swelling, phagocytosis and complement fixation through its calcium-dependent binding to phosphorylcholine. Can interact with DNA and histones and may scavenge nuclear material released from damaged circulating cells. This chain is C-reactive protein (Crp), found in Mus musculus (Mouse).